The primary structure comprises 208 residues: Interferon epsilon (208 aa).

Residues 1–21 (MIIKHFFGTVLVLLASTTIFS) form the signal peptide. A disulfide bridge connects residues Cys-53 and Cys-163. Residues Asn-95 and Asn-104 are each glycosylated (N-linked (GlcNAc...) asparagine).

This sequence belongs to the alpha/beta interferon family. Endometrium-specific.

It is found in the secreted. Functionally, type I interferon required for maintaining basal levels of IFN-regulated genes, including 2'-5'-oligoadenylate synthetase, IRF7 and ISG15, in the female reproductive tract. Directly mediates protection against viral and bacterial genital infections. The chain is Interferon epsilon (IFNE) from Homo sapiens (Human).